A 663-amino-acid chain; its full sequence is UvrABC system protein B (663 aa).

One can recognise a Helicase ATP-binding domain in the interval Asp31–Arg418. Gly44–Thr51 serves as a coordination point for ATP. The Beta-hairpin motif lies at Tyr97–Val120. The Helicase C-terminal domain occupies Gln435–Ile601. One can recognise a UVR domain in the interval Gln627–Ile662.

This sequence belongs to the UvrB family. Forms a heterotetramer with UvrA during the search for lesions. Interacts with UvrC in an incision complex.

The protein localises to the cytoplasm. Functionally, the UvrABC repair system catalyzes the recognition and processing of DNA lesions. A damage recognition complex composed of 2 UvrA and 2 UvrB subunits scans DNA for abnormalities. Upon binding of the UvrA(2)B(2) complex to a putative damaged site, the DNA wraps around one UvrB monomer. DNA wrap is dependent on ATP binding by UvrB and probably causes local melting of the DNA helix, facilitating insertion of UvrB beta-hairpin between the DNA strands. Then UvrB probes one DNA strand for the presence of a lesion. If a lesion is found the UvrA subunits dissociate and the UvrB-DNA preincision complex is formed. This complex is subsequently bound by UvrC and the second UvrB is released. If no lesion is found, the DNA wraps around the other UvrB subunit that will check the other stand for damage. The sequence is that of UvrABC system protein B from Streptococcus agalactiae serotype III (strain NEM316).